Here is a 1630-residue protein sequence, read N- to C-terminus: MDLHPPGGSKKTSVVVVTLDTGEVYVIASLLSKADTQVIYIDPTTGILRYNGKPGLDNFKSEREALDYITNGSRGGVRSSVYARAILGYAVLGSFGMLLVATRLNPSIPDLPGGGCVYTVAESQWVKIPLYNPQPQGKGETKNIQELTELDIDGKHYFCDTRDITRPFPSRMPLQSPDDEFVWNRWLSVPFKNIGLPEHCVILLQGFAEYRPFGSSGQLEGIVALMARRSRLHPGTRYLARGINSCSGTGNEVECEQLVWIPKRNGQSIAFNSYIWRRGTIPIWWGAELKMTAAEAEIYVADRDPYKGSTEYYQRLSKRYDTRNLDAPVGENQKKKAFVPIVCVNLLRSGEGKSECILVQHFEESMNFIKSSGKLPYTRVHLINYDWHASVKLKGEQQTIEGLWMYLKSPTMAIGISEGDYLPSRQRLKDCRGEVICIDDIEGAFCLRSHQNGVIRFNCADSLDRTNAASFFGGLQVFVEQCRRLGISLDTDLGYGHNSVNNQGGYNAPLPPGWEKRADAVTGKSYYIDHNTKTTTWSHPCPDKPWKRLDMRFEEFKRSTILSPVSELADLFLQQGDIHATLYTGSKAMHSQILNIFSEESGAFKQFSAAQKNMKITLQRRYKNAMVDSSRQKQLEMFLGMRLFKHLPSIPVQPLHVLSRPSGFFLKPVPNMSESSNDGSSLLSIKRKDITWLCPQAADIVELFIYLSEPCHVCQLLLTISHGADDLTCPSTVDVRTGRHIEDLKLVVEGASIPRCANGTNLLVPLPGPISSEDMAVTGAGARLHEKDTSSLSLLYDFEELEGQLDFLTRVVAVTFYPAGAVRIPMTLGQIEVLGISLPWKGMFTCERTGGRLAELARKPDEDGSPFSSCSDLNPFAATTSLQAETVSTPVQQKDPFPSNLLDLLTGEDSSSDPFPQPVVECIASGGNDMLDFLDEAVVEYRGSDTVPDGSVPQNKRPKDSGAHLYLNCLKSLAGPNMAKKLEFVEAMKLEIERLRLNISAAERDRALLSIGIDPATINPNSSYDELYIGRLCKIANALAVMGQASLEDKIIASIGLEKLENNVIDFWNITRIGEGCDGGMCQVRAEVNKSPVGSSTKSSRGESGSVFLCFQCMKKACKFCCAGKGALLLSKSYSRDTANGGGSLADVSATSIGSDHYICKKCCSSIVLEALIVDYVRVMVSLRRSGRVDNAGREALNEVFGSNITNHLAVRGQPSPNREDFNFLRQILGKEESLSEFPFASFLHKVETATDSAPFFSLLTPLNLASSNAYWKAPPSADSVEAAIVLNTLSDVSSVILLVSPCGYSDADAPTVQIWASSDINKEARTLMGKWDVQSFIRSSPELSGSEKSGRAPRHIKFAFKNPVRCRIIWITLRLPRLGSSSSVSLDKNINLLSLDENPFAPIPRRASFGATIENDPCIHAKHILVTGNTVRDKTLQSVESMSVRNWLDRAPRLNRFLIPLETERPMENDLVLELYLQPASPLAAGFRLDAFSAIKPRVTHSPSSDVVDIWDPTSVIMEDRHVSPAILYIQVSVLQEQYKMVTIAEYRLPEARDGTKLYFDFPKQIQAQRVSFKLLGDVAAFTDEPAEAVDLSSRASPFAAGLSLANRIKLYYYADPYEVGKWTSLSSV.

In terms of domain architecture, SAC spans 147 to 527; sequence LTELDIDGKH…ADAVTGKSYY (381 aa). Residues 456–467 carry the Phosphatase catalytic core; degenerate motif; sequence RFNCADSLDRTN. Positions 508-542 constitute a WW domain; the sequence is APLPPGWEKRADAVTGKSYYIDHNTKTTTWSHPCP.

In terms of tissue distribution, ubiquitous. Most abundant in the roots with lower expression levels throughout the leaves and shoot.

In terms of biological role, probable phosphoinositide phosphatase that could be involved in stress signaling. The polypeptide is Probable phosphoinositide phosphatase SAC9 (SAC9) (Arabidopsis thaliana (Mouse-ear cress)).